The sequence spans 185 residues: Ribosome-recycling factor (185 aa).

The protein belongs to the RRF family.

It localises to the cytoplasm. In terms of biological role, responsible for the release of ribosomes from messenger RNA at the termination of protein biosynthesis. May increase the efficiency of translation by recycling ribosomes from one round of translation to another. The protein is Ribosome-recycling factor of Ehrlichia ruminantium (strain Welgevonden).